Reading from the N-terminus, the 138-residue chain is Acidic phospholipase A2 1 (138 aa).

An N-terminal signal peptide occupies residues 1–16 (MRTLWIMAVLLVGVEG). Intrachain disulfides connect cysteine 42–cysteine 131, cysteine 44–cysteine 60, cysteine 59–cysteine 111, cysteine 65–cysteine 138, cysteine 66–cysteine 104, cysteine 73–cysteine 97, and cysteine 91–cysteine 102. 3 residues coordinate Ca(2+): phenylalanine 43, glycine 45, and glycine 47. Residue histidine 63 is part of the active site. Ca(2+) is bound at residue aspartate 64. Residue aspartate 105 is part of the active site.

Belongs to the phospholipase A2 family. Group II subfamily. D49 sub-subfamily. The cofactor is Ca(2+). In terms of tissue distribution, expressed by the venom gland.

It is found in the secreted. It catalyses the reaction a 1,2-diacyl-sn-glycero-3-phosphocholine + H2O = a 1-acyl-sn-glycero-3-phosphocholine + a fatty acid + H(+). Snake venom phospholipase A2 (PLA2) that has high lipolytic activity. PLA2 catalyzes the calcium-dependent hydrolysis of the 2-acyl groups in 3-sn-phosphoglycerides. This Craspedocephalus gramineus (Bamboo pit viper) protein is Acidic phospholipase A2 1.